Here is a 226-residue protein sequence, read N- to C-terminus: Deoxyribose-phosphate aldolase (226 aa).

D94 acts as the Proton donor/acceptor in catalysis. K156 (schiff-base intermediate with acetaldehyde) is an active-site residue. K185 functions as the Proton donor/acceptor in the catalytic mechanism.

It belongs to the DeoC/FbaB aldolase family. DeoC type 1 subfamily.

It localises to the cytoplasm. The catalysed reaction is 2-deoxy-D-ribose 5-phosphate = D-glyceraldehyde 3-phosphate + acetaldehyde. It functions in the pathway carbohydrate degradation; 2-deoxy-D-ribose 1-phosphate degradation; D-glyceraldehyde 3-phosphate and acetaldehyde from 2-deoxy-alpha-D-ribose 1-phosphate: step 2/2. In terms of biological role, catalyzes a reversible aldol reaction between acetaldehyde and D-glyceraldehyde 3-phosphate to generate 2-deoxy-D-ribose 5-phosphate. This is Deoxyribose-phosphate aldolase from Burkholderia lata (strain ATCC 17760 / DSM 23089 / LMG 22485 / NCIMB 9086 / R18194 / 383).